A 1200-amino-acid chain; its full sequence is DNA polymerase subunit gamma-1 (1200 aa).

2 disordered regions span residues 471 to 515 (QKKT…RPSM) and 667 to 688 (MDLS…SSEH). A compositionally biased stretch (basic residues) spans 472–481 (KKTKISKKQK). Over residues 494-512 (LVEDHNEDPGPPTEKEESR) the composition is skewed to basic and acidic residues.

This sequence belongs to the DNA polymerase type-A family. In terms of assembly, heterotrimer composed of a catalytic subunit and a homodimer of accessory subunits. Requires Mg(2+) as cofactor.

Its subcellular location is the mitochondrion. It is found in the mitochondrion matrix. The protein localises to the mitochondrion nucleoid. The enzyme catalyses DNA(n) + a 2'-deoxyribonucleoside 5'-triphosphate = DNA(n+1) + diphosphate. Functionally, involved in the replication of mitochondrial DNA. Associates with mitochondrial DNA. This chain is DNA polymerase subunit gamma-1 (polg), found in Xenopus laevis (African clawed frog).